The chain runs to 452 residues: Tubulin alpha-1 chain (452 aa).

Glutamine 11 contributes to the GTP binding site. Lysine 40 carries the N6-acetyllysine modification. GTP-binding residues include glutamate 71, glycine 144, threonine 145, threonine 179, asparagine 206, and asparagine 228. Glutamate 71 provides a ligand contact to Mg(2+). Residue glutamate 254 is part of the active site. The disordered stretch occupies residues 430–452 (KDYEEVGAESGDGDDDGLGEEEY). A compositionally biased stretch (acidic residues) spans 431 to 452 (DYEEVGAESGDGDDDGLGEEEY).

The protein belongs to the tubulin family. Dimer of alpha and beta chains. A typical microtubule is a hollow water-filled tube with an outer diameter of 25 nm and an inner diameter of 15 nM. Alpha-beta heterodimers associate head-to-tail to form protofilaments running lengthwise along the microtubule wall with the beta-tubulin subunit facing the microtubule plus end conferring a structural polarity. Microtubules usually have 13 protofilaments but different protofilament numbers can be found in some organisms and specialized cells. It depends on Mg(2+) as a cofactor. Undergoes a tyrosination/detyrosination cycle, the cyclic removal and re-addition of a C-terminal tyrosine residue by the enzymes tubulin tyrosine carboxypeptidase (TTCP) and tubulin tyrosine ligase (TTL), respectively. Post-translationally, acetylation of alpha chains at Lys-40 stabilizes microtubules and affects affinity and processivity of microtubule motors. This modification has a role in multiple cellular functions, ranging from cell motility, cell cycle progression or cell differentiation to intracellular trafficking and signaling.

Its subcellular location is the cytoplasm. The protein localises to the cytoskeleton. It catalyses the reaction GTP + H2O = GDP + phosphate + H(+). Tubulin is the major constituent of microtubules, a cylinder consisting of laterally associated linear protofilaments composed of alpha- and beta-tubulin heterodimers. Microtubules grow by the addition of GTP-tubulin dimers to the microtubule end, where a stabilizing cap forms. Below the cap, tubulin dimers are in GDP-bound state, owing to GTPase activity of alpha-tubulin. The protein is Tubulin alpha-1 chain (TUBA1) of Pisum sativum (Garden pea).